The primary structure comprises 451 residues: tRNA modification GTPase MnmE (451 aa).

The (6S)-5-formyl-5,6,7,8-tetrahydrofolate site is built by Arg-25, Glu-87, and Arg-127. The TrmE-type G domain occupies 222-374 (GLRVALVGRP…FVQVLLERCG (153 aa)). Asn-232 is a K(+) binding site. Residues 232-237 (NVGKSS), 251-257 (TELPGTT), and 276-279 (DTAG) each bind GTP. Residue Ser-236 coordinates Mg(2+). Residues Thr-251, Leu-253, and Thr-256 each contribute to the K(+) site. Residue Thr-257 coordinates Mg(2+). Lys-451 is a binding site for (6S)-5-formyl-5,6,7,8-tetrahydrofolate.

Belongs to the TRAFAC class TrmE-Era-EngA-EngB-Septin-like GTPase superfamily. TrmE GTPase family. In terms of assembly, homodimer. Heterotetramer of two MnmE and two MnmG subunits. The cofactor is K(+).

The protein localises to the cytoplasm. In terms of biological role, exhibits a very high intrinsic GTPase hydrolysis rate. Involved in the addition of a carboxymethylaminomethyl (cmnm) group at the wobble position (U34) of certain tRNAs, forming tRNA-cmnm(5)s(2)U34. This is tRNA modification GTPase MnmE from Synechococcus sp. (strain CC9902).